The chain runs to 1236 residues: Calcium-activated potassium channel subunit alpha-1 (1236 aa).

A compositionally biased stretch (gly residues) spans methionine 1 to serine 21. Residues methionine 1 to valine 61 form a disordered region. Topologically, residues methionine 1–methionine 86 are extracellular. Positions serine 39–serine 60 are enriched in low complexity. A helical membrane pass occupies residues tryptophan 87–leucine 107. Residues tryptophan 108–arginine 178 lie on the Cytoplasmic side of the membrane. S-palmitoyl cysteine attachment occurs at residues cysteine 118, cysteine 119, and cysteine 121. The chain crosses the membrane as a helical span at residues valine 179–serine 199. Residues serine 200–threonine 214 lie on the Extracellular side of the membrane. The helical transmembrane segment at leucine 215–alanine 235 threads the bilayer. Residues alanine 236–lysine 239 lie on the Cytoplasmic side of the membrane. The chain crosses the membrane as a helical span at residues leucine 240 to valine 260. Residues serine 261–leucine 264 lie on the Extracellular side of the membrane. A helical membrane pass occupies residues asparagine 265–isoleucine 285. The Cytoplasmic portion of the chain corresponds to leucine 286 to leucine 300. A helical transmembrane segment spans residues valine 301 to valine 321. Residues glutamate 322–glutamine 335 lie on the Extracellular side of the membrane. The segment at residues alanine 336–valine 358 is an intramembrane region (pore-forming). A Selectivity for potassium motif is present at residues threonine 352–tyrosine 355. Residues tyrosine 359–leucine 367 lie on the Extracellular side of the membrane. A helical membrane pass occupies residues phenylalanine 368–isoleucine 388. Topologically, residues glutamate 389 to leucine 1236 are cytoplasmic. The 143-residue stretch at arginine 407–isoleucine 549 folds into the RCK N-terminal 1 domain. Mg(2+)-binding residues include glutamate 439, glutamine 462, and glutamate 464. Positions leucine 556–phenylalanine 576 are segment S7. Residues leucine 613 to isoleucine 633 are segment S8. Residues cysteine 677–histidine 681 form a heme-binding motif region. Residues glutamate 757 to arginine 787 are disordered. Residue threonine 763 is modified to Phosphothreonine. Phosphoserine is present on residues serine 765, serine 778, and serine 782. A segment S9 region spans residues valine 837–leucine 857. The RCK N-terminal 2 domain occupies serine 839–proline 983. At threonine 970 the chain carries Phosphothreonine. Phosphoserine occurs at positions 978 and 982. The Calcium bowl motif lies at threonine 1003 to glutamate 1025. Residues glutamine 1012, aspartate 1015, aspartate 1018, and aspartate 1020 each coordinate Ca(2+). The interval phenylalanine 1032–phenylalanine 1052 is segment S10. A compositionally biased stretch (low complexity) spans arginine 1186–serine 1211. The interval arginine 1186–leucine 1236 is disordered. A compositionally biased stretch (basic and acidic residues) spans lysine 1220–leucine 1236. Serine 1221 and serine 1224 each carry phosphoserine.

The protein belongs to the potassium channel family. Calcium-activated (TC 1.A.1.3) subfamily. KCa1.1/KCNMA1 sub-subfamily. As to quaternary structure, homotetramer; which constitutes the calcium-activated potassium channel. Interacts with RAB11B. Interacts with beta subunits KCNMB1, KCNMB2, KCNMB3 and KCNMB4. Interacts with gamma subunits LRRC26, LRRC38, LRRC52 and LRRC55. Beta and gamma subunits are accessory, and modulate its activity. Post-translationally, phosphorylated. Phosphorylation by kinases such as PKA and/or PKG. In smooth muscles, phosphorylation affects its activity. In terms of processing, palmitoylation by ZDHHC22 and ZDHHC23 within the intracellular linker between the S0 and S1 transmembrane domains regulates localization to the plasma membrane. Depalmitoylated by LYPLA1 and LYPLAL1, leading to retard exit from the trans-Golgi network. As to expression, widely expressed. Except in myocytes, it is almost ubiquitously expressed.

It is found in the cell membrane. The enzyme catalyses K(+)(in) = K(+)(out). Ethanol and carbon monoxide-bound heme increase channel activation. Heme inhibits channel activation. Functionally, potassium channel activated by both membrane depolarization or increase in cytosolic Ca(2+) that mediates export of K(+). It is also activated by the concentration of cytosolic Mg(2+). Its activation dampens the excitatory events that elevate the cytosolic Ca(2+) concentration and/or depolarize the cell membrane. It therefore contributes to repolarization of the membrane potential. Plays a key role in controlling excitability in a number of systems, such as regulation of the contraction of smooth muscle, the tuning of hair cells in the cochlea, regulation of transmitter release, and innate immunity. In smooth muscles, its activation by high level of Ca(2+), caused by ryanodine receptors in the sarcoplasmic reticulum, regulates the membrane potential. In cochlea cells, its number and kinetic properties partly determine the characteristic frequency of each hair cell and thereby helps to establish a tonotopic map. Kinetics of KCNMA1 channels are determined by alternative splicing, phosphorylation status and its combination with modulating beta subunits. Highly sensitive to both iberiotoxin (IbTx) and charybdotoxin (CTX). Possibly induces sleep when activated by melatonin and through melatonin receptor MTNR1A-dependent dissociation of G-beta and G-gamma subunits, leading to increased sensitivity to Ca(2+) and reduced synaptic transmission. Its function is as follows. Potassium channel activated by both membrane depolarization or increase in cytosolic Ca(2+) that mediates export of K(+). The protein is Calcium-activated potassium channel subunit alpha-1 of Homo sapiens (Human).